The following is a 327-amino-acid chain: METKTVAITMGDPAGIGPEIIVKALSEDGLNGAPLVVIGCLATLKRLQAKGITPNVELRAIERVAEARFAPGIIHVIDEPLAQPEALEAGKVQAQAGDLAYRCVKRATELALRGDVQAIATAPLNKEALHLAGHNYPGHTELLATLTHSRDYAMVLYTDKLKVIHVSTHIALRKFLDTLSTARVETVIGIADTFLKRVGYVKPRIAVAGVNPHAGENGLFGDEETRILTPAITDARAKGMDVYGPCPPDTVFLQAYEGQYDMVVAMYHDQGHIPLKLLGFYDGVNITAGLPFIRTSADHGTAFDIAWTGKAKSESMAVSIKLAMQLA.

Substrate-binding residues include H139 and T140. Residues H169, H213, and H268 each contribute to the a divalent metal cation site. Substrate-binding residues include K276, N285, and R294.

Belongs to the PdxA family. PdxA2 subfamily. As to quaternary structure, homodimer. Requires a divalent metal cation as cofactor.

The catalysed reaction is 4-O-phospho-D-threonate + NAD(+) = dihydroxyacetone phosphate + CO2 + NADH. Functionally, catalyzes the NAD-dependent oxidation and subsequent decarboxylation of D-threonate 4-phosphate to produce dihydroxyacetone phosphate (DHAP). Can also use 4-hydroxy-L-threonine 4-phosphate as substrate. The polypeptide is D-threonate 4-phosphate dehydrogenase (Salmonella typhimurium (strain LT2 / SGSC1412 / ATCC 700720)).